The following is a 373-amino-acid chain: Dual-specificity RNA methyltransferase RlmN (373 aa).

Glu-94 functions as the Proton acceptor in the catalytic mechanism. A Radical SAM core domain is found at 100-339; sequence EDDRATLCVS…VIVRKTRGDD (240 aa). A disulfide bridge links Cys-107 with Cys-344. 3 residues coordinate [4Fe-4S] cluster: Cys-114, Cys-118, and Cys-121. S-adenosyl-L-methionine contacts are provided by residues 168 to 169, Ser-200, 222 to 224, and Asn-301; these read GE and SIH. Cys-344 serves as the catalytic S-methylcysteine intermediate.

It belongs to the radical SAM superfamily. RlmN family. [4Fe-4S] cluster serves as cofactor.

It is found in the cytoplasm. The enzyme catalyses adenosine(2503) in 23S rRNA + 2 reduced [2Fe-2S]-[ferredoxin] + 2 S-adenosyl-L-methionine = 2-methyladenosine(2503) in 23S rRNA + 5'-deoxyadenosine + L-methionine + 2 oxidized [2Fe-2S]-[ferredoxin] + S-adenosyl-L-homocysteine. It carries out the reaction adenosine(37) in tRNA + 2 reduced [2Fe-2S]-[ferredoxin] + 2 S-adenosyl-L-methionine = 2-methyladenosine(37) in tRNA + 5'-deoxyadenosine + L-methionine + 2 oxidized [2Fe-2S]-[ferredoxin] + S-adenosyl-L-homocysteine. Its function is as follows. Specifically methylates position 2 of adenine 2503 in 23S rRNA and position 2 of adenine 37 in tRNAs. m2A2503 modification seems to play a crucial role in the proofreading step occurring at the peptidyl transferase center and thus would serve to optimize ribosomal fidelity. The sequence is that of Dual-specificity RNA methyltransferase RlmN from Shewanella sp. (strain MR-7).